The following is a 188-amino-acid chain: Elongation factor P-like protein (188 aa).

The protein belongs to the elongation factor P family.

The chain is Elongation factor P-like protein from Vibrio campbellii (strain ATCC BAA-1116).